A 402-amino-acid chain; its full sequence is Putative cystathionine beta-lyase (402 aa).

Lys236 carries the N6-(pyridoxal phosphate)lysine modification.

It belongs to the class-II pyridoxal-phosphate-dependent aminotransferase family. MalY/PatB cystathionine beta-lyase subfamily. Pyridoxal 5'-phosphate is required as a cofactor.

The catalysed reaction is L,L-cystathionine + H2O = L-homocysteine + pyruvate + NH4(+). It carries out the reaction an S-substituted L-cysteine + H2O = a thiol + pyruvate + NH4(+). It functions in the pathway amino-acid biosynthesis; L-methionine biosynthesis via de novo pathway; L-homocysteine from L-cystathionine: step 1/1. This chain is Putative cystathionine beta-lyase, found in Mycobacterium leprae (strain TN).